We begin with the raw amino-acid sequence, 471 residues long: V-type ATP synthase beta chain (471 aa).

Belongs to the ATPase alpha/beta chains family.

Produces ATP from ADP in the presence of a proton gradient across the membrane. The V-type beta chain is a regulatory subunit. The polypeptide is V-type ATP synthase beta chain (Streptococcus pyogenes serotype M49 (strain NZ131)).